We begin with the raw amino-acid sequence, 394 residues long: Ceramide glucosyltransferase (394 aa).

Over 1–10 (MALLDLALEG) the chain is Lumenal. The chain crosses the membrane as a helical span at residues 11–32 (MAVFGFVLFLVLWLMHFMAIIY). The Cytoplasmic segment spans residues 33 to 195 (TRLHLNKKAT…QVYFGTSHPR (163 aa)). A short sequence motif (D1) is located at residue Asp-92. An N6-acetyllysine modification is found at Lys-117. Position 144 (Asp-144) is a short sequence motif, D2. A helical transmembrane segment spans residues 196–215 (YYISANVTGFKCVTGMSCLM). Residues 216 to 287 (RKDVLDQAGG…KLRINMLPAT (72 aa)) are Lumenal-facing. Position 236 (Asp-236) is a short sequence motif, D3. Asp-236 acts as the Proton acceptor in catalysis. The short motif at 272-276 (RMIRW) is the (Q/R)XXRW element. The chain crosses the membrane as a helical span at residues 288–304 (IICEPISECFVASLIIG). At 305 to 309 (WAAHH) the chain is on the cytoplasmic side. Residues 310–328 (VFRWDIMVFFMCHCLAWFI) traverse the membrane as a helical segment. Topologically, residues 329–348 (FDYIQLRGVQGGTLCFSKLD) are lumenal. A helical transmembrane segment spans residues 349–369 (YAVAWFIRESMTIYIFLSALW). The Cytoplasmic portion of the chain corresponds to 370-394 (DPTISWRTGRYRLRCGGTAEEILDV).

This sequence belongs to the glycosyltransferase 2 family. Interacts with RTN1; regulates the ceramide glucosyltransferase activity of UGCG. In terms of tissue distribution, found in all tissues examined.

The protein localises to the golgi apparatus membrane. It carries out the reaction an N-acylsphing-4-enine + UDP-alpha-D-glucose = a beta-D-glucosyl-(1&lt;-&gt;1')-N-acylsphing-4-enine + UDP + H(+). The enzyme catalyses UDP-alpha-D-xylose + an N-acylsphing-4-enine = a beta-D-xylosyl-(1&lt;-&gt;1')-N-acylsphing-4-enine + UDP + H(+). The catalysed reaction is N-(9Z-octadecenoyl)-sphing-4-enine + UDP-alpha-D-xylose = beta-D-xylosyl-(1&lt;-&gt;1')-N-(9Z-octadecenoyl)-sphing-4-enine + UDP + H(+). Its pathway is lipid metabolism; sphingolipid metabolism. Functionally, participates in the initial step of the glucosylceramide-based glycosphingolipid/GSL synthetic pathway at the cytosolic surface of the Golgi. Catalyzes the transfer of glucose from UDP-glucose to ceramide to produce glucosylceramide/GlcCer (such as beta-D-glucosyl-(1&lt;-&gt;1')-N-acylsphing-4-enine). GlcCer is the core component of glycosphingolipids/GSLs, amphipathic molecules consisting of a ceramide lipid moiety embedded in the outer leaflet of the membrane, linked to one of hundreds of different externally oriented oligosaccharide structures. Glycosphingolipids are essential components of membrane microdomains that mediate membrane trafficking and signal transduction, implicated in many fundamental cellular processes, including growth, differentiation, migration, morphogenesis, cell-to-cell and cell-to-matrix interactions. They are required for instance in the proper development and functioning of the nervous system. As an example of their role in signal transduction, they regulate the leptin receptor/LEPR in the leptin-mediated signaling pathway. They also play an important role in the establishment of the skin barrier regulating keratinocyte differentiation and the proper assembly of the cornified envelope. The biosynthesis of GSLs is also required for the proper intestinal endocytic uptake of nutritional lipids. Catalyzes the synthesis of xylosylceramide/XylCer (such as beta-D-xylosyl-(1&lt;-&gt;1')-N-acylsphing-4-enine) using UDP-Xyl as xylose donor. The polypeptide is Ceramide glucosyltransferase (Homo sapiens (Human)).